The chain runs to 498 residues: Glycerol kinase (498 aa).

ADP is bound at residue Thr-12. 3 residues coordinate ATP: Thr-12, Thr-13, and Ser-14. Sn-glycerol 3-phosphate is bound at residue Thr-12. Arg-16 lines the ADP pocket. Positions 82, 83, 135, and 245 each coordinate sn-glycerol 3-phosphate. Arg-82, Glu-83, Tyr-135, Asp-245, and Gln-246 together coordinate glycerol. Residues Thr-267 and Gly-310 each coordinate ADP. Positions 267, 310, 314, and 411 each coordinate ATP. Gly-411 and Asn-415 together coordinate ADP.

It belongs to the FGGY kinase family. As to quaternary structure, homotetramer and homodimer (in equilibrium).

It catalyses the reaction glycerol + ATP = sn-glycerol 3-phosphate + ADP + H(+). It functions in the pathway polyol metabolism; glycerol degradation via glycerol kinase pathway; sn-glycerol 3-phosphate from glycerol: step 1/1. Activated by phosphorylation and inhibited by fructose 1,6-bisphosphate (FBP). Its function is as follows. Key enzyme in the regulation of glycerol uptake and metabolism. Catalyzes the phosphorylation of glycerol to yield sn-glycerol 3-phosphate. This chain is Glycerol kinase, found in Clostridium botulinum (strain Eklund 17B / Type B).